Consider the following 208-residue polypeptide: Probable adenylyl-sulfate kinase (208 aa).

ATP is bound at residue 38–45 (GLSGSGKS). The active-site Phosphoserine intermediate is the Ser112.

Belongs to the APS kinase family.

It carries out the reaction adenosine 5'-phosphosulfate + ATP = 3'-phosphoadenylyl sulfate + ADP + H(+). It functions in the pathway sulfur metabolism; hydrogen sulfide biosynthesis; sulfite from sulfate: step 2/3. Its function is as follows. Catalyzes the synthesis of activated sulfate. The polypeptide is Probable adenylyl-sulfate kinase (Halalkalibacterium halodurans (strain ATCC BAA-125 / DSM 18197 / FERM 7344 / JCM 9153 / C-125) (Bacillus halodurans)).